Consider the following 1372-residue polypeptide: DNA-directed RNA polymerase subunit beta (1372 aa).

This sequence belongs to the RNA polymerase beta chain family. As to quaternary structure, the RNAP catalytic core consists of 2 alpha, 1 beta, 1 beta' and 1 omega subunit. When a sigma factor is associated with the core the holoenzyme is formed, which can initiate transcription.

It catalyses the reaction RNA(n) + a ribonucleoside 5'-triphosphate = RNA(n+1) + diphosphate. DNA-dependent RNA polymerase catalyzes the transcription of DNA into RNA using the four ribonucleoside triphosphates as substrates. The sequence is that of DNA-directed RNA polymerase subunit beta from Nitratidesulfovibrio vulgaris (strain DSM 19637 / Miyazaki F) (Desulfovibrio vulgaris).